The chain runs to 431 residues: MPLRLDNASPDFASKFKAFLAMKREVAADIEAATRAIVDDVAHRGDAALLEATEKFDRLTLDAAGMRVGEAEVEAAVKACDSETVDALKLARDRIEFFHRRQLPKDDRFTDPLGVELGWRWSAIEAVGLYVPGGTAAYPSSVLMNAIPAKVAGVERVVMVVPSPGGTLNPLVLAAAQLAGATEIYRIGGAQAVAALAYGTATIAPVAKIVGPGNAYVAAAKRLVFGRVGIDMIAGPSEVVVVADKTANPDWIAADLLAQAEHDANAQSILITDSAVLAADVERALAAQLTTLPRVKIARASWDEFGAIIKVAKLEDAVPLANAIAAEHLEIMTADPEAFADKIRNAGAIFLGGHTPEAIGDYVGGSNHVLPTARSARFSSGLGVLDFMKRTSILKCGPEQLAVLGPAAMALGKAEGLDAHARSVGLRLNQR.

NAD(+) contacts are provided by Tyr-130, Gln-191, and Asn-214. 3 residues coordinate substrate: Ser-237, Gln-259, and His-262. Residues Gln-259 and His-262 each contribute to the Zn(2+) site. Residues Glu-327 and His-328 each act as proton acceptor in the active site. 4 residues coordinate substrate: His-328, Asp-361, Glu-415, and His-420. Asp-361 provides a ligand contact to Zn(2+). Residue His-420 coordinates Zn(2+).

This sequence belongs to the histidinol dehydrogenase family. Requires Zn(2+) as cofactor.

It carries out the reaction L-histidinol + 2 NAD(+) + H2O = L-histidine + 2 NADH + 3 H(+). It participates in amino-acid biosynthesis; L-histidine biosynthesis; L-histidine from 5-phospho-alpha-D-ribose 1-diphosphate: step 9/9. Catalyzes the sequential NAD-dependent oxidations of L-histidinol to L-histidinaldehyde and then to L-histidine. The protein is Histidinol dehydrogenase of Rhodopseudomonas palustris (strain ATCC BAA-98 / CGA009).